The primary structure comprises 94 residues: Integration host factor subunit beta (94 aa).

The protein belongs to the bacterial histone-like protein family. In terms of assembly, heterodimer of an alpha and a beta chain.

This protein is one of the two subunits of integration host factor, a specific DNA-binding protein that functions in genetic recombination as well as in transcriptional and translational control. This Vibrio campbellii (strain ATCC BAA-1116) protein is Integration host factor subunit beta.